The sequence spans 407 residues: NAD(P)H-quinone oxidoreductase subunit 1 (407 aa).

Transmembrane regions (helical) follow at residues 28–48, 96–116, 127–147, 175–195, 203–223, 267–287, 309–329, 347–367, and 374–394; these read WLPL…IAAV, WLFT…YLVI, ITIG…GALM, LALS…VDIV, LFSF…IFLI, LILA…FIVP, ALVG…LAIL, WKFL…LVLL, and TLPL…AMSL.

The protein belongs to the complex I subunit 1 family. NDH-1 is composed of at least 11 different subunits.

The protein localises to the cell inner membrane. It catalyses the reaction a plastoquinone + NADH + (n+1) H(+)(in) = a plastoquinol + NAD(+) + n H(+)(out). It carries out the reaction a plastoquinone + NADPH + (n+1) H(+)(in) = a plastoquinol + NADP(+) + n H(+)(out). Functionally, NDH-1 shuttles electrons from an unknown electron donor, via FMN and iron-sulfur (Fe-S) centers, to quinones in the respiratory and/or the photosynthetic chain. The immediate electron acceptor for the enzyme in this species is believed to be plastoquinone. Couples the redox reaction to proton translocation, and thus conserves the redox energy in a proton gradient. The chain is NAD(P)H-quinone oxidoreductase subunit 1 from Gloeobacter violaceus (strain ATCC 29082 / PCC 7421).